The following is a 434-amino-acid chain: CCA tRNA nucleotidyltransferase 1, mitochondrial (434 aa).

A mitochondrion-targeting transit peptide spans 1-41 (MQSVLYPWHRQVLRCSWSRLCLLKRYLFTMKLQSPEFQSLF). The ATP site is built by G64 and R67. The CTP site is built by G64 and R67. Mg(2+)-binding residues include D77 and D79. The ATP site is built by R151, D194, R197, R200, and R203. Residues R151, D194, R197, R200, and R203 each contribute to the CTP site. At S400 the chain carries Phosphoserine. Position 402 is an N6-acetyllysine (K402).

Belongs to the tRNA nucleotidyltransferase/poly(A) polymerase family. Monomer, and homodimer. Mg(2+) is required as a cofactor.

It localises to the mitochondrion. The protein localises to the cytoplasm. The protein resides in the nucleus. It carries out the reaction a tRNA precursor + 2 CTP + ATP = a tRNA with a 3' CCA end + 3 diphosphate. The enzyme catalyses a tRNA with a 3' CCA end + 2 CTP + ATP = a tRNA with a 3' CCACCA end + 3 diphosphate. Nucleotidyltransferase that catalyzes the addition and repair of the essential 3'-terminal CCA sequence in tRNAs, which is necessary for the attachment of amino acids to the 3' terminus of tRNA molecules, using CTP and ATP as substrates. tRNA 3'-terminal CCA addition is required both for tRNA processing and repair. Promotes tRNA repair and recycling downstream of the ribosome-associated quality control (RQC) pathway by mediating addition of the tRNA 3'-terminal CCA following cleavage by ANKZF1 and repair by ELAC1. Also involved in tRNA surveillance by mediating tandem CCA addition to generate a CCACCA at the 3' terminus of unstable tRNAs and tRNA-like transcripts. While stable tRNAs receive only 3'-terminal CCA, unstable tRNAs beginning with GG are marked with CCACCA and rapidly degraded. The structural flexibility of RNA controls the choice between CCA versus CCACCA addition: following the first CCA addition cycle, nucleotide-binding to the active site triggers a clockwise screw motion, producing torque on the RNA. This ejects stable RNAs, whereas unstable RNAs are refolded while bound to the enzyme and subjected to a second CCA catalytic cycle. In Mus musculus (Mouse), this protein is CCA tRNA nucleotidyltransferase 1, mitochondrial (Trnt1).